Consider the following 372-residue polypeptide: 4-hydroxy-3-methylbut-2-en-1-yl diphosphate synthase (flavodoxin) (372 aa).

[4Fe-4S] cluster-binding residues include Cys270, Cys273, Cys305, and Glu312.

It belongs to the IspG family. It depends on [4Fe-4S] cluster as a cofactor.

It catalyses the reaction (2E)-4-hydroxy-3-methylbut-2-enyl diphosphate + oxidized [flavodoxin] + H2O + 2 H(+) = 2-C-methyl-D-erythritol 2,4-cyclic diphosphate + reduced [flavodoxin]. It participates in isoprenoid biosynthesis; isopentenyl diphosphate biosynthesis via DXP pathway; isopentenyl diphosphate from 1-deoxy-D-xylulose 5-phosphate: step 5/6. In terms of biological role, converts 2C-methyl-D-erythritol 2,4-cyclodiphosphate (ME-2,4cPP) into 1-hydroxy-2-methyl-2-(E)-butenyl 4-diphosphate. The sequence is that of 4-hydroxy-3-methylbut-2-en-1-yl diphosphate synthase (flavodoxin) from Salmonella gallinarum (strain 287/91 / NCTC 13346).